The following is a 587-amino-acid chain: Nucleoporin ndc-1 (587 aa).

The Cytoplasmic portion of the chain corresponds to 1–79 (MMGENSSAYT…FHSEIDVRKK (79 aa)). Positions 32-55 (ASTSATSSPNLRKSPNRGFSSPRA) are disordered. A helical transmembrane segment spans residues 80–100 (LASFVCGAAVALSFIVTVSIL). Residues 101–121 (KLSIWAPFSSVQDSLTWWLYP) lie on the Perinuclear space side of the membrane. The helical transmembrane segment at 122–142 (TSWPVTLFIWLSSVAWTFLII) threads the bilayer. Topologically, residues 143 to 161 (HQFCTVTQVPRIPITDTYA) are cytoplasmic. A helical membrane pass occupies residues 162 to 182 (WAGAALEFVHRLIFVYTAFTV). At 183–187 (SESSF) the chain is on the perinuclear space side. A helical membrane pass occupies residues 188-208 (FEDFAWIAIAFSVAISSALVI). The Cytoplasmic segment spans residues 209 to 255 (FRSDFHLNFSNVQVNSFKTLIDFAKSLPYGSLAETSGVDAAIAYTAA). A helical transmembrane segment spans residues 256–276 (MALTVFGSPLLWGFSAWWLLI). At 277–281 (NIQFH) the chain is on the perinuclear space side. The chain crosses the membrane as a helical span at residues 282-302 (LVLFGVCFAQQFFAKIFMKIV). Topologically, residues 303–587 (NQIVMKPMKF…TIKLVCAEEI (285 aa)) are cytoplasmic.

This sequence belongs to the NDC1 family.

The protein localises to the nucleus. The protein resides in the nuclear pore complex. It is found in the nucleus membrane. Component of the nuclear pore complex (NPC), which plays a key role in de novo assembly and insertion of NPC in the nuclear envelope. The protein is Nucleoporin ndc-1 (npp-22) of Caenorhabditis briggsae.